A 507-amino-acid chain; its full sequence is Secreted lipase ARB_01498 (507 aa).

An N-terminal signal peptide occupies residues 1–21 (MFVQLLTYGLVAASTLQGVFA). The active-site Acyl-ester intermediate is S196. Residues N262, N321, N358, and N416 are each glycosylated (N-linked (GlcNAc...) asparagine).

Belongs to the type-B carboxylesterase/lipase family.

The protein resides in the secreted. The enzyme catalyses a triacylglycerol + H2O = a diacylglycerol + a fatty acid + H(+). This Arthroderma benhamiae (strain ATCC MYA-4681 / CBS 112371) (Trichophyton mentagrophytes) protein is Secreted lipase ARB_01498.